Here is a 280-residue protein sequence, read N- to C-terminus: Ribonuclease Z (280 aa).

The Zn(2+) site is built by histidine 61, histidine 63, aspartate 65, histidine 66, histidine 153, aspartate 176, and histidine 240. Aspartate 65 acts as the Proton acceptor in catalysis.

It belongs to the RNase Z family. In terms of assembly, homodimer. The cofactor is Zn(2+).

The catalysed reaction is Endonucleolytic cleavage of RNA, removing extra 3' nucleotides from tRNA precursor, generating 3' termini of tRNAs. A 3'-hydroxy group is left at the tRNA terminus and a 5'-phosphoryl group is left at the trailer molecule.. Zinc phosphodiesterase, which displays some tRNA 3'-processing endonuclease activity. Probably involved in tRNA maturation, by removing a 3'-trailer from precursor tRNA. The protein is Ribonuclease Z of Mycolicibacterium paratuberculosis (strain ATCC BAA-968 / K-10) (Mycobacterium paratuberculosis).